We begin with the raw amino-acid sequence, 679 residues long: Protein hook (679 aa).

In terms of domain architecture, Calponin-homology (CH) spans 5-123; it reads NGMYYSLLEW…RLLQLVLGCA (119 aa). Residues 140–627 are a coiled coil; it reads EEELQANIMR…SKTKMSTMEE (488 aa).

Belongs to the hook family. As to quaternary structure, homodimer. Interacts with microtubules via its N-terminus.

The protein resides in the cytoplasm. The protein localises to the cytoskeleton. It localises to the endosome. Its subcellular location is the synapse. Involved in endocytic trafficking by stabilizing organelles of the endocytic pathway. Probably acts as a cytoskeletal linker protein required to tether endosome vesicles to the cytoskeleton. Involved in modulation of endocytosis at stages required for down-regulation of membrane proteins that control synapse size. Not involved in synaptic vesicle recycling. Required in R7 cells for boss endocytosis into multivesicular bodies (MVBs). Has a role in regulating adult longevity. This Drosophila mojavensis (Fruit fly) protein is Protein hook.